A 245-amino-acid chain; its full sequence is Nisin immunity protein (245 aa).

The signal sequence occupies residues 1-19; sequence MRRYLILIVALIGITGLSG. Residue Cys20 is the site of N-palmitoyl cysteine attachment. Cys20 carries the S-diacylglycerol cysteine lipid modification.

It localises to the cell membrane. Functionally, involved in immunity against exogenously supplied nisin. The chain is Nisin immunity protein (nisI) from Lactococcus lactis subsp. lactis (Streptococcus lactis).